A 424-amino-acid polypeptide reads, in one-letter code: Serine--tRNA ligase (424 aa).

228–230 (TAE) is a binding site for L-serine. ATP is bound at residue 259 to 261 (RSE). Residue Glu-282 participates in L-serine binding. An ATP-binding site is contributed by 346–349 (EISS). Ser-382 serves as a coordination point for L-serine.

This sequence belongs to the class-II aminoacyl-tRNA synthetase family. Type-1 seryl-tRNA synthetase subfamily. As to quaternary structure, homodimer. The tRNA molecule binds across the dimer.

Its subcellular location is the cytoplasm. The catalysed reaction is tRNA(Ser) + L-serine + ATP = L-seryl-tRNA(Ser) + AMP + diphosphate + H(+). It carries out the reaction tRNA(Sec) + L-serine + ATP = L-seryl-tRNA(Sec) + AMP + diphosphate + H(+). The protein operates within aminoacyl-tRNA biosynthesis; selenocysteinyl-tRNA(Sec) biosynthesis; L-seryl-tRNA(Sec) from L-serine and tRNA(Sec): step 1/1. In terms of biological role, catalyzes the attachment of serine to tRNA(Ser). Is also able to aminoacylate tRNA(Sec) with serine, to form the misacylated tRNA L-seryl-tRNA(Sec), which will be further converted into selenocysteinyl-tRNA(Sec). This Rhodospirillum centenum (strain ATCC 51521 / SW) protein is Serine--tRNA ligase.